Reading from the N-terminus, the 212-residue chain is Adenylate kinase (212 aa).

Position 10–15 (G10–T15) interacts with ATP. The NMP stretch occupies residues A30 to I59. AMP-binding positions include R36, E57–I59, G85–R88, and Q92. The segment at G122–D160 is LID. R123 serves as a coordination point for ATP. Zn(2+) is bound by residues C126 and C129. I132–Y133 contributes to the ATP binding site. Residues C146 and C149 each coordinate Zn(2+). AMP-binding residues include R157 and R168. K196 contributes to the ATP binding site.

Belongs to the adenylate kinase family. Monomer.

Its subcellular location is the cytoplasm. The enzyme catalyses AMP + ATP = 2 ADP. The protein operates within purine metabolism; AMP biosynthesis via salvage pathway; AMP from ADP: step 1/1. Catalyzes the reversible transfer of the terminal phosphate group between ATP and AMP. Plays an important role in cellular energy homeostasis and in adenine nucleotide metabolism. This chain is Adenylate kinase, found in Rickettsia rickettsii (strain Iowa).